We begin with the raw amino-acid sequence, 213 residues long: Response regulator GacA (213 aa).

A Response regulatory domain is found at 3 to 119; the sequence is RVLVVDDHDL…EMVQAIRLVF (117 aa). A 4-aspartylphosphate modification is found at Asp-54. Residues 142 to 207 form the HTH luxR-type domain; that stretch reads SDSPFDALSE…ELTLLAVRHG (66 aa). Positions 166-185 form a DNA-binding region, H-T-H motif; the sequence is VQIISDKLCLSPKTVNTYRY.

In terms of processing, phosphorylated by GacS.

In terms of biological role, member of the two-component regulatory system GacA/GacS which controls the expression of secondary metabolites and extracellular products. Acts (probably primarily) by activating expression of CsrA1 and CsrA2 antagonist small RNAs (sRNA) RsmX, RsmY and RsmZ which bind to and prevent translation repression by CsrA1 and CsrA2. Involved in the regulation of secondary metabolism and in the synthesis of the antifungal factors cyanide, 2,4-diacetylphloroglucinol and pyoluteorin. Involved in synthesis of the autoinducing signal (unrelated to N-acylhomoserine lactones, induces the Gac/Csr cascade). Exercises positive post-transcriptional control over the hcnABC and aprA genes; acts upstream of CsrA2 (rsmA). Controls expression of csrA1 (rsmE) and csrA2. This is Response regulator GacA from Pseudomonas protegens (strain DSM 19095 / LMG 27888 / CFBP 6595 / CHA0).